Here is a 338-residue protein sequence, read N- to C-terminus: CDP-paratose 2-epimerase (338 aa).

Substrate is bound at residue Thr124. Tyr164 acts as the Proton acceptor in catalysis.

Belongs to the NAD(P)-dependent epimerase/dehydratase family. As to quaternary structure, homotetramer. Requires NAD(+) as cofactor.

It catalyses the reaction CDP-alpha-D-paratose = CDP-3,6-dideoxy-alpha-D-mannose. Its pathway is nucleotide-sugar biosynthesis; CDP-3,6-dideoxy-D-mannose biosynthesis; CDP-3,6-dideoxy-D-mannose from CTP and alpha-D-glucose 1-phosphate: step 5/5. In terms of biological role, catalyzes the isomeration of CDP-paratose to CDP-tyvelose. This is CDP-paratose 2-epimerase (rfbE) from Salmonella typhi.